Consider the following 730-residue polypeptide: Ribosomal RNA large subunit methyltransferase K/L (730 aa).

One can recognise a THUMP domain in the interval 46–157 (TAYRLCVWSR…RGEAILSLDL (112 aa)). The disordered stretch occupies residues 394–418 (GERREAQPEGTEARQQVPQASEPAR).

This sequence belongs to the methyltransferase superfamily. RlmKL family.

The protein localises to the cytoplasm. It catalyses the reaction guanosine(2445) in 23S rRNA + S-adenosyl-L-methionine = N(2)-methylguanosine(2445) in 23S rRNA + S-adenosyl-L-homocysteine + H(+). The enzyme catalyses guanosine(2069) in 23S rRNA + S-adenosyl-L-methionine = N(2)-methylguanosine(2069) in 23S rRNA + S-adenosyl-L-homocysteine + H(+). Its function is as follows. Specifically methylates the guanine in position 2445 (m2G2445) and the guanine in position 2069 (m7G2069) of 23S rRNA. This Pseudomonas putida (strain ATCC 700007 / DSM 6899 / JCM 31910 / BCRC 17059 / LMG 24140 / F1) protein is Ribosomal RNA large subunit methyltransferase K/L.